The sequence spans 252 residues: MMPLIHLWTSLPVAKLEVGHHFYWHIGNLKVHGQVFITTWIVMGILIVAALAASRNIQRVPSGIQNLMEYALEFIRDLTKSQMGEHEYRAWVPFVGTLFLFIFVCNWSGALVPWKLIELPEGELAAPTNDINTTVALALLVSLAYFYAGLRKRGLKYFTKYIEPTPVLLPIAILEDFTKPLSLSFRLFGNILADELVVGVLVLLVPLFVPLPVMALGLFTSAIQALVFATLAATYIGEAMEGHGGEHEEAHS.

5 helical membrane passes run 33 to 53, 92 to 112, 130 to 150, 196 to 216, and 217 to 237; these read GQVFITTWIVMGILIVAALAA, VPFVGTLFLFIFVCNWSGALV, DINTTVALALLVSLAYFYAGL, LVVGVLVLLVPLFVPLPVMAL, and GLFTSAIQALVFATLAATYIG.

The protein belongs to the ATPase A chain family. As to quaternary structure, F-type ATPases have 2 components, CF(1) - the catalytic core - and CF(0) - the membrane proton channel. CF(1) has five subunits: alpha(3), beta(3), gamma(1), delta(1), epsilon(1). CF(0) has three main subunits: a(1), b(2) and c(9-12). The alpha and beta chains form an alternating ring which encloses part of the gamma chain. CF(1) is attached to CF(0) by a central stalk formed by the gamma and epsilon chains, while a peripheral stalk is formed by the delta and b chains.

The protein resides in the cellular thylakoid membrane. In terms of biological role, key component of the proton channel; it plays a direct role in the translocation of protons across the membrane. This is ATP synthase subunit a from Synechococcus sp. (strain PCC 6716).